The chain runs to 116 residues: Putative iron-sulfur cluster insertion protein ErpA (116 aa).

Iron-sulfur cluster-binding residues include cysteine 44, cysteine 108, and cysteine 110.

This sequence belongs to the HesB/IscA family. In terms of assembly, homodimer. The cofactor is iron-sulfur cluster.

Its function is as follows. Required for insertion of 4Fe-4S clusters. The polypeptide is Putative iron-sulfur cluster insertion protein ErpA (Aromatoleum aromaticum (strain DSM 19018 / LMG 30748 / EbN1) (Azoarcus sp. (strain EbN1))).